The primary structure comprises 552 residues: Low-affinity Fe(2+) transport protein (552 aa).

The Extracellular segment spans residues 1–97 (MGKIAEFLGN…DFLVRVAGSQ (97 aa)). Lysine 39 is covalently cross-linked (Glycyl lysine isopeptide (Lys-Gly) (interchain with G-Cter in ubiquitin)). A phosphoserine mark is found at serine 48 and serine 50. A helical transmembrane segment spans residues 98–118 (AVFFIVWIILIIWVVIGIVYN). At 119–225 (APFNWQVVMQ…SNVASRYMGS (107 aa)) the chain is on the cytoplasmic side. The chain crosses the membrane as a helical span at residues 226-246 (IAAMVIFWIGIFVWIGCGAIP). Topologically, residues 247-271 (KDAGNTPPYTGETTGSNPRLKKFSD) are extracellular. The helical transmembrane segment at 272-292 (AWQMYINTAVAVSLLICTTFL) threads the bilayer. Topologically, residues 293–354 (QNIRARHDYF…GRKMIDWYAD (62 aa)) are cytoplasmic. A helical transmembrane segment spans residues 355 to 375 (IIGTGIGVLIGVAVFATWIGI). The Extracellular portion of the chain corresponds to 376–383 (GSPMKWDD). A helical transmembrane segment spans residues 384–404 (NWWLIIGTYTGLIGFLDGFVL). Residues 405 to 465 (REVYFRIVQH…SQYINRICST (61 aa)) lie on the Cytoplasmic side of the membrane. A helical transmembrane segment spans residues 466 to 486 (PWSVLVSVIIIIGLICIASGL). Topologically, residues 487–493 (RWSTTGQ) are extracellular. The chain crosses the membrane as a helical span at residues 494 to 514 (LIANTPTMIIEEFFLLVLLQA). Over 515–552 (HNWADRQRRVEVTALYARRRILLSYVEKRFPEVMMLEK) the chain is Cytoplasmic.

Belongs to the FET4 family.

Its subcellular location is the membrane. Its function is as follows. Required for Fe(2+) ion low affinity uptake. The polypeptide is Low-affinity Fe(2+) transport protein (FET4) (Saccharomyces cerevisiae (strain ATCC 204508 / S288c) (Baker's yeast)).